We begin with the raw amino-acid sequence, 256 residues long: Hemin import ATP-binding protein HmuV (256 aa).

An ABC transporter domain is found at 2-238; that stretch reads ISAQNLVYSL…QALTMLYGAD (237 aa). ATP is bound at residue 34 to 41; it reads GPNGAGKS.

The protein belongs to the ABC transporter superfamily. Heme (hemin) importer (TC 3.A.1.14.5) family. In terms of assembly, the complex is composed of two ATP-binding proteins (HmuV), two transmembrane proteins (HmuU) and a solute-binding protein (HmuT).

Its subcellular location is the cell inner membrane. Functionally, part of the ABC transporter complex HmuTUV involved in hemin import. Responsible for energy coupling to the transport system. This Shigella dysenteriae serotype 1 (strain Sd197) protein is Hemin import ATP-binding protein HmuV.